We begin with the raw amino-acid sequence, 796 residues long: ATP-dependent DNA helicase PIF6 (796 aa).

The tract at residues 197–230 is disordered; that stretch reads RPTGLPSAHSGGKLPKHMGGDELNPQLEGSTTPG. An ATP-binding site is contributed by 255–262; that stretch reads GSAGTGKT. A DNA-binding region spans residues 636–655; that stretch reads QAYVALSRVRSREDLMLTAF. 2 disordered regions span residues 692-719 and 762-796; these read KGKT…PEEH and TSSA…VDDD.

Belongs to the helicase family. PIF1 subfamily. As to quaternary structure, monomer. Mg(2+) serves as cofactor.

It is found in the nucleus. It carries out the reaction Couples ATP hydrolysis with the unwinding of duplex DNA at the replication fork by translocating in the 5'-3' direction. This creates two antiparallel DNA single strands (ssDNA). The leading ssDNA polymer is the template for DNA polymerase III holoenzyme which synthesizes a continuous strand.. It catalyses the reaction ATP + H2O = ADP + phosphate + H(+). DNA-dependent ATPase and 5'-3' DNA helicase required for the maintenance of genome stability. The sequence is that of ATP-dependent DNA helicase PIF6 from Trypanosoma brucei brucei (strain 927/4 GUTat10.1).